Here is a 189-residue protein sequence, read N- to C-terminus: UPF0301 protein RC0043 (189 aa).

The protein belongs to the UPF0301 (AlgH) family.

The polypeptide is UPF0301 protein RC0043 (Rickettsia conorii (strain ATCC VR-613 / Malish 7)).